Consider the following 84-residue polypeptide: Beta-mammal/insect toxin Ts1 (84 aa).

A signal peptide spans 1–20 (MKGMILFISCLLLIGIVVEC). The 62-residue stretch at 21–82 (KEGYLMDHEG…VWDRATNKCG (62 aa)) folds into the LCN-type CS-alpha/beta domain. 4 cysteine pairs are disulfide-bonded: cysteine 31–cysteine 81, cysteine 35–cysteine 57, cysteine 43–cysteine 62, and cysteine 47–cysteine 64. Position 81 is a cysteine amide (cysteine 81).

This sequence belongs to the long (4 C-C) scorpion toxin superfamily. Sodium channel inhibitor family. In terms of processing, C-terminal amidation is important for high activity. In terms of tissue distribution, expressed by the venom gland.

Its subcellular location is the secreted. In terms of biological role, voltage-gated sodium channels (Nav) gating-modifier. Acts both as alpha- and beta-toxin, since it affects not only activation but also inactivation of Nav channels. Binds to Nav domain DII and impairs the four Nav channel voltage sensors movements. Depending on Nav channel subtypes tested, can also bind Nav domains DIII (low affinity) and DIV (very low affinity). Acts on almost all the Nav channels tested (mammalian Nav1.2/SCN2A, Nav1.3/SCN3A, Nav1.4/SCN4A, Nav1.5/SCN5A, Nav1.6/SCN8A, Nav1.9/SCN11A, and insect DmNav1). Is highly active against both mammals and insects. Irreversibly modulates DmNav channels. Other Ts1 activities have been studied, such as immunomodulation, antimicrobial activity or exocrine secretion. This toxin exhibits an antifungal activity against filamentous fungi. In vitro, it has an important immunomodulatory effect on macrophages by stimulating the release of pro-inflammatory cytokines. It also shows an activity in exocrine secretion in pancreas, stomach and adrenal gland. The polypeptide is Beta-mammal/insect toxin Ts1 (Tityus serrulatus (Brazilian scorpion)).